A 360-amino-acid polypeptide reads, in one-letter code: Pyrimidine monooxygenase RutA (360 aa).

FMN-binding positions include 49–50 (IK), Asn-115, Glu-124, 140–141 (RY), and Ser-190.

This sequence belongs to the NtaA/SnaA/DszA monooxygenase family. RutA subfamily.

It catalyses the reaction uracil + FMNH2 + NADH + O2 = (Z)-3-ureidoacrylate + FMN + NAD(+) + H2O + H(+). The enzyme catalyses thymine + FMNH2 + NADH + O2 = (Z)-2-methylureidoacrylate + FMN + NAD(+) + H2O + H(+). Its function is as follows. Catalyzes the pyrimidine ring opening between N-3 and C-4 by an unusual flavin hydroperoxide-catalyzed mechanism, adding oxygen atoms in the process to yield ureidoacrylate peracid, that immediately reacts with FMN forming ureidoacrylate and FMN-N(5)-oxide. The FMN-N(5)-oxide reacts spontaneously with NADH to produce FMN. Requires the flavin reductase RutF to regenerate FMN in vivo. The sequence is that of Pyrimidine monooxygenase RutA from Pseudomonas savastanoi pv. phaseolicola (strain 1448A / Race 6) (Pseudomonas syringae pv. phaseolicola (strain 1448A / Race 6)).